The following is a 348-amino-acid chain: Spermidine/putrescine import ATP-binding protein PotA (348 aa).

One can recognise an ABC transporter domain in the interval 6 to 236 (IRLVNVTKEY…PKNVFVADFI (231 aa)). 38–45 (GPSGCGKT) contacts ATP.

The protein belongs to the ABC transporter superfamily. Spermidine/putrescine importer (TC 3.A.1.11.1) family. In terms of assembly, the complex is composed of two ATP-binding proteins (PotA), two transmembrane proteins (PotB and PotC) and a solute-binding protein (PotD).

It localises to the cell membrane. It carries out the reaction ATP + H2O + polyamine-[polyamine-binding protein]Side 1 = ADP + phosphate + polyamineSide 2 + [polyamine-binding protein]Side 1.. In terms of biological role, part of the ABC transporter complex PotABCD involved in spermidine/putrescine import. Responsible for energy coupling to the transport system. The protein is Spermidine/putrescine import ATP-binding protein PotA of Desulfitobacterium hafniense (strain Y51).